Here is a 639-residue protein sequence, read N- to C-terminus: Protein phosphatase EYA4 (639 aa).

Methionine 1 is modified (N-acetylmethionine). Disordered stretches follow at residues methionine 1–asparagine 72, glutamine 210–glycine 232, and alanine 300–leucine 368. Residue lysine 14 forms a Glycyl lysine isopeptide (Lys-Gly) (interchain with G-Cter in SUMO2) linkage. The segment covering glutamate 18 to methionine 30 has biased composition (polar residues). Lysine 52 is covalently cross-linked (Glycyl lysine isopeptide (Lys-Gly) (interchain with G-Cter in SUMO2)). Low complexity predominate over residues serine 56–asparagine 66. A compositionally biased stretch (polar residues) spans alanine 300–threonine 334. A Phosphoserine modification is found at serine 361. Aspartate 375 functions as the Nucleophile in the catalytic mechanism. Mg(2+) contacts are provided by aspartate 375, aspartate 377, and aspartate 603. Aspartate 377 acts as the Proton donor in catalysis.

Belongs to the HAD-like hydrolase superfamily. EYA family. Interacts with SIX3; translocates EYA4 from the cytoplasm to the nucleus and promotes activation of their target genes. Mg(2+) is required as a cofactor. As to expression, highly expressed in heart and skeletal muscle.

It localises to the cytoplasm. Its subcellular location is the nucleus. It catalyses the reaction O-phospho-L-tyrosyl-[protein] + H2O = L-tyrosyl-[protein] + phosphate. Its function is as follows. Tyrosine phosphatase that specifically dephosphorylates 'Tyr-142' of histone H2AX (H2AXY142ph). 'Tyr-142' phosphorylation of histone H2AX plays a central role in DNA repair and acts as a mark that distinguishes between apoptotic and repair responses to genotoxic stress. Promotes efficient DNA repair by dephosphorylating H2AX, promoting the recruitment of DNA repair complexes containing MDC1. Its function as histone phosphatase probably explains its role in transcription regulation during organogenesis. May be involved in development of the eye. The chain is Protein phosphatase EYA4 (EYA4) from Homo sapiens (Human).